Here is an 85-residue protein sequence, read N- to C-terminus: Small ribosomal subunit protein bS18 (85 aa).

Belongs to the bacterial ribosomal protein bS18 family. As to quaternary structure, part of the 30S ribosomal subunit. Forms a tight heterodimer with protein bS6.

In terms of biological role, binds as a heterodimer with protein bS6 to the central domain of the 16S rRNA, where it helps stabilize the platform of the 30S subunit. The protein is Small ribosomal subunit protein bS18 of Solidesulfovibrio magneticus (strain ATCC 700980 / DSM 13731 / RS-1) (Desulfovibrio magneticus).